Reading from the N-terminus, the 67-residue chain is Phycobilisome 7.8 kDa linker polypeptide, allophycocyanin-associated, core (67 aa).

One can recognise a CpcD-like domain in the interval 1 to 56; it reads MRMFRITACLPSPSKIRTQRELQNTFFTKLVPYDAWFREQQRIQKLGGKIIKVELA.

This sequence belongs to the phycobilisome linker protein family.

The protein localises to the cellular thylakoid membrane. Functionally, rod linker protein, associated with allophycocyanin. Linker polypeptides determine the state of aggregation and the location of the disk-shaped phycobiliprotein units within the phycobilisome and modulate their spectroscopic properties in order to mediate a directed and optimal energy transfer. This is Phycobilisome 7.8 kDa linker polypeptide, allophycocyanin-associated, core (apcC) from Synechococcus sp. (strain ATCC 27144 / PCC 6301 / SAUG 1402/1) (Anacystis nidulans).